A 212-amino-acid chain; its full sequence is Thiamine-phosphate synthase (212 aa).

4-amino-2-methyl-5-(diphosphooxymethyl)pyrimidine is bound by residues 43-47 (QYRNK) and Asn-75. 2 residues coordinate Mg(2+): Asp-76 and Asp-95. Ser-114 lines the 4-amino-2-methyl-5-(diphosphooxymethyl)pyrimidine pocket. Residue 141 to 143 (SMT) coordinates 2-[(2R,5Z)-2-carboxy-4-methylthiazol-5(2H)-ylidene]ethyl phosphate. Residue Lys-144 participates in 4-amino-2-methyl-5-(diphosphooxymethyl)pyrimidine binding. Gly-171 contacts 2-[(2R,5Z)-2-carboxy-4-methylthiazol-5(2H)-ylidene]ethyl phosphate.

Belongs to the thiamine-phosphate synthase family. Mg(2+) is required as a cofactor.

It carries out the reaction 2-[(2R,5Z)-2-carboxy-4-methylthiazol-5(2H)-ylidene]ethyl phosphate + 4-amino-2-methyl-5-(diphosphooxymethyl)pyrimidine + 2 H(+) = thiamine phosphate + CO2 + diphosphate. It catalyses the reaction 2-(2-carboxy-4-methylthiazol-5-yl)ethyl phosphate + 4-amino-2-methyl-5-(diphosphooxymethyl)pyrimidine + 2 H(+) = thiamine phosphate + CO2 + diphosphate. The enzyme catalyses 4-methyl-5-(2-phosphooxyethyl)-thiazole + 4-amino-2-methyl-5-(diphosphooxymethyl)pyrimidine + H(+) = thiamine phosphate + diphosphate. It participates in cofactor biosynthesis; thiamine diphosphate biosynthesis; thiamine phosphate from 4-amino-2-methyl-5-diphosphomethylpyrimidine and 4-methyl-5-(2-phosphoethyl)-thiazole: step 1/1. Functionally, condenses 4-methyl-5-(beta-hydroxyethyl)thiazole monophosphate (THZ-P) and 2-methyl-4-amino-5-hydroxymethyl pyrimidine pyrophosphate (HMP-PP) to form thiamine monophosphate (TMP). This is Thiamine-phosphate synthase from Nitrosomonas eutropha (strain DSM 101675 / C91 / Nm57).